The primary structure comprises 45 residues: Putative purine permease 9 (45 aa).

As to expression, not detected in seedlings, leaves, embryos or root and shoot meristems.

This chain is Putative purine permease 9, found in Arabidopsis thaliana (Mouse-ear cress).